The following is a 515-amino-acid chain: Histidine ammonia-lyase (515 aa).

The 5-imidazolinone (Ala-Gly) cross-link spans A146–G148. At S147 the chain carries 2,3-didehydroalanine (Ser).

Belongs to the PAL/histidase family. In terms of processing, contains an active site 4-methylidene-imidazol-5-one (MIO), which is formed autocatalytically by cyclization and dehydration of residues Ala-Ser-Gly.

The protein localises to the cytoplasm. The catalysed reaction is L-histidine = trans-urocanate + NH4(+). It participates in amino-acid degradation; L-histidine degradation into L-glutamate; N-formimidoyl-L-glutamate from L-histidine: step 1/3. In Ralstonia nicotianae (strain ATCC BAA-1114 / GMI1000) (Ralstonia solanacearum), this protein is Histidine ammonia-lyase (hutH).